We begin with the raw amino-acid sequence, 559 residues long: MSQASSSPGEGPSSEAAAISEAEAASGSFGRLHCQVLRLITNVEGGSLEAGRLRLLDLRTNIEVSRPSVLCCFQENKSPHDTVDLTDLNIKGRCVVGEQDRLLVDLNNFGPRRLTPGSENNTVSVLAFALPLDRVPVSGLHLFQSQRRGGEENRPRMEARAIIRRTAHHWAVRLTVTPNWRRRTDSSLEAGQIFVSQFAFRAGAIPLTLVDALEQLACSDPNTYIHKTETDERGQWIMLFLHHDSPHPPTSVFLHFSVYTHRAEVVARHNPYPHLRRLPDNGFQLLIPKSFTLTRIHPEYIVQIQNAFETNQTHDTIFFPENIPGVSIEAGPLPDRVRITLRVTLTGDQAVHLEHRQPLGRIHFFRRGFWTLTPGKPDKIKRPQVQLRAGLFPRSNVMRGAVSEFLPQSPGLPPTEEEEEEEEEDDEDDLSSTPTPTPLSEAMFAGFEEASGDEDSDTQAGLSPALILTGQRRRSGNNGALTLVIPSWHVFASLDDLVPLTVSVQHAALRPTSYLRSDMDGDVRTAADISSTLRSVPAPRPSPISTASTSSTPRSRPRI.

An S-nitrosocysteine; by host modification is found at cysteine 218. Threonine 223 carries the phosphothreonine modification. Disordered regions lie at residues glutamate 404 to serine 440 and serine 530 to isoleucine 559. The segment covering threonine 415–leucine 430 has biased composition (acidic residues). Composition is skewed to low complexity over residues serine 431–serine 440 and proline 543–isoleucine 559.

The protein belongs to the herpesviridae pp71 family. In terms of assembly, interacts with the host protein DAXX; this interaction takes place at ND10 and induces the reversal of DAXX-mediated repression of viral transcription. Interacts with UL35. Interacts with host TMEM173/STING1; this interaction inhibits the cGAS/STING pathway. Interacts with host RB1; this interaction mediates RB1 proteasomal degradation. In terms of processing, S-nitrosylation limits ability to undermine the cGAS/STING antiviral pathway.

The protein resides in the virion tegument. Its subcellular location is the host nucleus. It localises to the host endoplasmic reticulum. In terms of biological role, stimulates viral immediate-early (IE) transcription. Plays a role in the inhibition of the host innate repsonse by targeting STING1 and thus the cGAS-STING pathway. Also counteracts host DAXX-mediated repression of viral transcription. Displaces a DAXX-binding protein, ATRX, from nuclear domain 10 sites (ND10) shortly after infection. Increases the basal level of SUMOylated DAXX in infected cells. Stimulates quiescent cells to re-enter the cell cycle, proceed through G1 and enter the S phase. Interacts with hypophosphorylated forms of RB1 and induces their degradation by the proteasome without involving ubiquitin conjugation. The polypeptide is Protein pp71 (UL82) (Human cytomegalovirus (strain AD169) (HHV-5)).